Reading from the N-terminus, the 318-residue chain is Fe(3+) dicitrate transport system permease protein FecD (318 aa).

Residues 1-2 lie on the Cytoplasmic side of the membrane; the sequence is MK. A helical membrane pass occupies residues 3 to 23; sequence IALVIFITLALAGCALLSLHM. The Periplasmic portion of the chain corresponds to 24 to 55; the sequence is GVIPVPWRALLTDWQAGHEHYYVLMEYRLPRL. A helical membrane pass occupies residues 56–76; sequence LLALFVGAALAVAGVLIQGIV. Residues 77–105 are Cytoplasmic-facing; the sequence is RNPLASPDILGVNHAASLASVGALLLMPS. Residues 106–126 traverse the membrane as a helical segment; it reads LPVMVLPLLAFAGGMAGLILL. Topologically, residues 127–137 are periplasmic; the sequence is KMLAKTHQPMK. The helical transmembrane segment at 138–158 threads the bilayer; sequence LALTGVALSACWASLTDYLML. The Cytoplasmic portion of the chain corresponds to 159 to 179; that stretch reads SRPQDVNNALLWLTGSLWGRD. The helical transmembrane segment at 180–200 threads the bilayer; the sequence is WSFVKIAIPLMILFLPLSLSF. Residues 201 to 225 lie on the Periplasmic side of the membrane; the sequence is CRDLDLLALGDARATTLGVSVPHTR. The helical transmembrane segment at 226–246 threads the bilayer; sequence FWALLLAVAMTSTGVAACGPI. Over 247-269 the chain is Cytoplasmic; the sequence is SFIGLVVPHMMRSITGGRHRRLL. A helical transmembrane segment spans residues 270–290; it reads PVSALTGALLLVVADLLARII. Over 291 to 294 the chain is Periplasmic; it reads HPPL. Residues 295–315 form a helical membrane-spanning segment; that stretch reads ELPVGVLTAIIGAPWFVWLLV. Residues 316–318 are Cytoplasmic-facing; sequence RMR.

The protein belongs to the binding-protein-dependent transport system permease family. FecCD subfamily. In terms of assembly, the complex is composed of two ATP-binding proteins (FecE), two transmembrane proteins (FecC and FecD) and a solute-binding protein (FecB). Interacts with FecB.

Its subcellular location is the cell inner membrane. Part of the ABC transporter complex FecBCDE involved in citrate-dependent Fe(3+) uptake. Probably responsible for the translocation of the substrate across the membrane. The protein is Fe(3+) dicitrate transport system permease protein FecD of Escherichia coli (strain K12).